We begin with the raw amino-acid sequence, 951 residues long: Replication protein A 70 kDa DNA-binding subunit C (951 aa).

Residues 139–172 (AQTNNGTYSGGASMLGPSVAPRAEQAASNSSYGG) form a disordered region. The segment at residues 320 to 403 (WTIKARVTAK…NTLNHDYEIT (84 aa)) is a DNA-binding region (OB). Residues 612–639 (CPKLLPVGRQCNKKAINNGDGMWHCDRC) form a C4-type zinc finger.

Belongs to the replication factor A protein 1 family. In terms of assembly, heterotrimer of RPA1, RPA2 and RPA3 (canonical replication protein A complex). Interacts with RPA2C.

The protein resides in the nucleus. In terms of biological role, component of the replication protein A complex (RPA) required for DNA recombination, repair and replication. The activity of RPA is mediated by single-stranded DNA binding and protein interactions. Probably involved in repair of double-strand DNA breaks (DSBs) induced by genotoxic stresses. This is Replication protein A 70 kDa DNA-binding subunit C (RPA1C) from Oryza sativa subsp. japonica (Rice).